The chain runs to 97 residues: Co-chaperonin GroES (97 aa).

Belongs to the GroES chaperonin family. As to quaternary structure, heptamer of 7 subunits arranged in a ring. Interacts with the chaperonin GroEL.

Its subcellular location is the cytoplasm. Its function is as follows. Together with the chaperonin GroEL, plays an essential role in assisting protein folding. The GroEL-GroES system forms a nano-cage that allows encapsulation of the non-native substrate proteins and provides a physical environment optimized to promote and accelerate protein folding. GroES binds to the apical surface of the GroEL ring, thereby capping the opening of the GroEL channel. The polypeptide is Co-chaperonin GroES (Pseudomonas putida (strain W619)).